Reading from the N-terminus, the 449-residue chain is Naphthalene 1,2-dioxygenase system, large oxygenase component (449 aa).

A Rieske domain is found at 39-137 (WLFLTHDSLI…LDKKCMGLKE (99 aa)). C81, H83, C101, and H104 together coordinate [2Fe-2S] cluster. H208, H213, and D362 together coordinate Fe cation.

This sequence belongs to the bacterial ring-hydroxylating dioxygenase alpha subunit family. The naphthalene dioxygenase (NDO) multicomponent enzyme system is composed of an electron transfer component and a dioxygenase component (iron sulfur protein (ISP)). The electron transfer component is composed of a ferredoxin reductase (NdoR) and a ferredoxin (NdoA), and the dioxygenase component is formed of a heterohexamer (trimer of heterodimers) of three large alpha subunits (NdoB) and three small beta subunits (NdoC). Requires [2Fe-2S] cluster as cofactor. It depends on Fe(2+) as a cofactor.

The enzyme catalyses naphthalene + NADH + O2 + H(+) = (1R,2S)-1,2-dihydronaphthalene-1,2-diol + NAD(+). It functions in the pathway aromatic compound metabolism; naphthalene degradation. In terms of biological role, component of the naphthalene dioxygenase (NDO) multicomponent enzyme system which catalyzes the incorporation of both atoms of molecular oxygen into naphthalene to form cis-(1R,2S)-dihydroxy-1,2-dihydronaphthalene. The alpha subunit has a catalytic role in the holoenzyme. In Pseudomonas aeruginosa, this protein is Naphthalene 1,2-dioxygenase system, large oxygenase component.